The sequence spans 608 residues: Serine/threonine-protein kinase ROP17 (608 aa).

An N-terminal signal peptide occupies residues 1–21 (MELVLCFVIITISGVIRESSA). Asparagine 76 carries N-linked (GlcNAc...) asparagine glycosylation. The 297-residue stretch at 283-579 (LKKRGFLGGG…QQALEQFSLL (297 aa)) folds into the Protein kinase domain. Residues 289–297 (LGGGGFGLV) and lysine 312 each bind ATP. Aspartate 436 (proton acceptor) is an active-site residue.

It belongs to the protein kinase superfamily. Ser/Thr protein kinase family. As to quaternary structure, interacts with ROP5; interaction with ROP5 does not affect kinase activity. Interacts with human BCL2; the interaction probably promotes BCL2 phosphorylation and degradation.

It localises to the secreted. It is found in the cytoplasmic vesicle. The protein resides in the secretory vesicle. The protein localises to the rhoptry. Its subcellular location is the parasitophorous vacuole membrane. The catalysed reaction is L-threonyl-[protein] + ATP = O-phospho-L-threonyl-[protein] + ADP + H(+). The enzyme catalyses L-seryl-[protein] + ATP = O-phospho-L-seryl-[protein] + ADP + H(+). Protein kinase. Virulence factor. Promotes migration of Toxoplasma-infected macrophages through collagen matrix, facilitating parasite transport through tissues and systemic dissemination. Plays a role in the translocation of dense granule effectors, such as GRA16 and GRA24, across the parasitophorous vacuole membrane in Toxoplasma-infected host cells. Phosphorylates mouse IRGB6 (TGTP1/TGTP2), an immunity-related GTPase (IRG) that protects mice from infection by certain intracellular pathogens; the phosphorylation leads to the disassembly of IRGB6 polymers into monomers and dimers. May modulate gene expression in human cells. Promotes autophagy in human cells via modulation of the BCL2-BECN1 pathway. The sequence is that of Serine/threonine-protein kinase ROP17 from Toxoplasma gondii.